The chain runs to 498 residues: Glycerol kinase (498 aa).

Thr-11 is an ADP binding site. ATP is bound by residues Thr-11, Thr-12, and Ser-13. Position 11 (Thr-11) interacts with sn-glycerol 3-phosphate. Arg-15 is an ADP binding site. The sn-glycerol 3-phosphate site is built by Arg-81, Glu-82, Tyr-133, and Asp-242. Residues Arg-81, Glu-82, Tyr-133, Asp-242, and Gln-243 each coordinate glycerol. ADP is bound by residues Thr-264 and Gly-307. Positions 264, 307, 311, and 411 each coordinate ATP. Residue Gly-411 coordinates ADP.

It belongs to the FGGY kinase family.

The enzyme catalyses glycerol + ATP = sn-glycerol 3-phosphate + ADP + H(+). It participates in polyol metabolism; glycerol degradation via glycerol kinase pathway; sn-glycerol 3-phosphate from glycerol: step 1/1. With respect to regulation, inhibited by fructose 1,6-bisphosphate (FBP). Its function is as follows. Key enzyme in the regulation of glycerol uptake and metabolism. Catalyzes the phosphorylation of glycerol to yield sn-glycerol 3-phosphate. The protein is Glycerol kinase of Afipia carboxidovorans (strain ATCC 49405 / DSM 1227 / KCTC 32145 / OM5) (Oligotropha carboxidovorans).